A 361-amino-acid chain; its full sequence is Phospho-N-acetylmuramoyl-pentapeptide-transferase (361 aa).

Helical transmembrane passes span 21–41, 74–94, 97–117, 132–152, 168–188, 199–219, 239–259, 264–284, 288–308, and 339–359; these read YLTVRAILALFTALLLSLWIG, MGGIMILFAIGVSTLLWANLA, YVWFCLFVLFGYGAVGFVDDY, WKYFWLSVIALISAFGMYAIG, VMPQLGLFYIVLAYFVIVGTG, GLAIMPTVFVAAAFALIAWAT, LVIFCTAIVGAGLGFLWFNTY, FMGDVGSLALGGVLGTIAVLV, FLLVIMGGVFVVETLSVILQV, and VIIRFWIISLMLVLLGLITLK.

Belongs to the glycosyltransferase 4 family. MraY subfamily. It depends on Mg(2+) as a cofactor.

The protein localises to the cell inner membrane. It carries out the reaction UDP-N-acetyl-alpha-D-muramoyl-L-alanyl-gamma-D-glutamyl-meso-2,6-diaminopimeloyl-D-alanyl-D-alanine + di-trans,octa-cis-undecaprenyl phosphate = di-trans,octa-cis-undecaprenyl diphospho-N-acetyl-alpha-D-muramoyl-L-alanyl-D-glutamyl-meso-2,6-diaminopimeloyl-D-alanyl-D-alanine + UMP. It participates in cell wall biogenesis; peptidoglycan biosynthesis. In terms of biological role, catalyzes the initial step of the lipid cycle reactions in the biosynthesis of the cell wall peptidoglycan: transfers peptidoglycan precursor phospho-MurNAc-pentapeptide from UDP-MurNAc-pentapeptide onto the lipid carrier undecaprenyl phosphate, yielding undecaprenyl-pyrophosphoryl-MurNAc-pentapeptide, known as lipid I. The protein is Phospho-N-acetylmuramoyl-pentapeptide-transferase of Histophilus somni (strain 129Pt) (Haemophilus somnus).